A 274-amino-acid chain; its full sequence is NH(3)-dependent NAD(+) synthetase (274 aa).

Residue 46 to 53 coordinates ATP; the sequence is GISGGQDS. Aspartate 52 serves as a coordination point for Mg(2+). Arginine 140 contributes to the deamido-NAD(+) binding site. Threonine 160 provides a ligand contact to ATP. Glutamate 165 lines the Mg(2+) pocket. Deamido-NAD(+) is bound by residues lysine 173 and aspartate 180. Residues lysine 189 and threonine 211 each coordinate ATP. Residue 260 to 261 participates in deamido-NAD(+) binding; it reads HK.

It belongs to the NAD synthetase family. Homodimer.

It carries out the reaction deamido-NAD(+) + NH4(+) + ATP = AMP + diphosphate + NAD(+) + H(+). Its pathway is cofactor biosynthesis; NAD(+) biosynthesis; NAD(+) from deamido-NAD(+) (ammonia route): step 1/1. Catalyzes the ATP-dependent amidation of deamido-NAD to form NAD. Uses ammonia as a nitrogen source. This chain is NH(3)-dependent NAD(+) synthetase, found in Streptococcus equi subsp. zooepidemicus (strain MGCS10565).